A 395-amino-acid polypeptide reads, in one-letter code: Oxalate oxidoreductase subunit alpha (395 aa).

Dimer of heterotrimer of one alpha, one beta and one delta subunit.

It catalyses the reaction oxidized 2[4Fe-4S]-[ferredoxin] + oxalate = reduced 2[4Fe-4S]-[ferredoxin] + 2 CO2. In terms of biological role, catalyzes the anaerobic oxidation of oxalate using a broad range of electron acceptors, including ferredoxin and the nickel-dependent carbon monoxide dehydrogenase. Does not require coenzyme A as cosubstrate. Enables anaerobic growth on oxalate which is used as energy source by the bacteria. This is Oxalate oxidoreductase subunit alpha from Moorella thermoacetica (strain ATCC 39073 / JCM 9320).